The chain runs to 351 residues: Probable RNA methyltransferase BAV1540 (351 aa).

Glu90 functions as the Proton acceptor in the catalytic mechanism. One can recognise a Radical SAM core domain in the interval 93 to 319; the sequence is LLPRDGLCVS…VKVRNSAGQD (227 aa). Cys100 and Cys324 form a disulfide bridge. The [4Fe-4S] cluster site is built by Cys107, Cys111, and Cys114. Residues 152–153, Ser182, 205–207, and Asn281 contribute to the S-adenosyl-L-methionine site; these read GE and SLH. The active-site S-methylcysteine intermediate is the Cys324.

It belongs to the radical SAM superfamily. RlmN family. [4Fe-4S] cluster is required as a cofactor.

It is found in the cytoplasm. The chain is Probable RNA methyltransferase BAV1540 from Bordetella avium (strain 197N).